The sequence spans 704 residues: UvrABC system protein C (704 aa).

The segment at 1–77 (MIHDPAEPPA…PAQAGAGPMA (77 aa)) is disordered. The span at 49–66 (VEEDDEARLPEVEDEPEA) shows a compositional bias: acidic residues. Low complexity predominate over residues 67–77 (EPAQAGAGPMA). Residues 92–170 (TSPGVYRMLN…IKQLRPRFNV (79 aa)) enclose the GIY-YIG domain. Residues 280-315 (RAVKELLAAEMEKASGELEFETAALYRDRLAALSAI) form the UVR domain.

Belongs to the UvrC family. As to quaternary structure, interacts with UvrB in an incision complex.

The protein resides in the cytoplasm. The UvrABC repair system catalyzes the recognition and processing of DNA lesions. UvrC both incises the 5' and 3' sides of the lesion. The N-terminal half is responsible for the 3' incision and the C-terminal half is responsible for the 5' incision. This chain is UvrABC system protein C, found in Rhodopseudomonas palustris (strain ATCC BAA-98 / CGA009).